The sequence spans 327 residues: Glycerol-3-phosphate dehydrogenase [NAD(P)+] (327 aa).

Residues tryptophan 11, histidine 30, and lysine 103 each coordinate NADPH. Sn-glycerol 3-phosphate contacts are provided by lysine 103, glycine 131, and serine 133. Alanine 135 lines the NADPH pocket. The sn-glycerol 3-phosphate site is built by lysine 186, aspartate 243, serine 253, arginine 254, and asparagine 255. Lysine 186 (proton acceptor) is an active-site residue. NADPH is bound at residue arginine 254. Valine 281 and glutamate 283 together coordinate NADPH.

The protein belongs to the NAD-dependent glycerol-3-phosphate dehydrogenase family.

It is found in the cytoplasm. The enzyme catalyses sn-glycerol 3-phosphate + NAD(+) = dihydroxyacetone phosphate + NADH + H(+). The catalysed reaction is sn-glycerol 3-phosphate + NADP(+) = dihydroxyacetone phosphate + NADPH + H(+). Its pathway is membrane lipid metabolism; glycerophospholipid metabolism. In terms of biological role, catalyzes the reduction of the glycolytic intermediate dihydroxyacetone phosphate (DHAP) to sn-glycerol 3-phosphate (G3P), the key precursor for phospholipid synthesis. This Wolbachia pipientis wMel protein is Glycerol-3-phosphate dehydrogenase [NAD(P)+].